The following is a 571-amino-acid chain: Dual specificity testis-specific protein kinase 2 (571 aa).

One can recognise a Protein kinase domain in the interval 58–313 (DFTCEKIGSG…EIGKTLEEIL (256 aa)). ATP is bound by residues 64–72 (IGSGFFSEV) and lysine 87. Aspartate 176 acts as the Proton acceptor in catalysis. A Phosphoserine; by autocatalysis modification is found at serine 219. Phosphoserine is present on residues serine 369, serine 456, and serine 460. A disordered region spans residues 521–571 (ENGFGSRPQGTSPCPAGASEEMEVEERPAGSTPATFSTSGIGLQTQGKQDG). Over residues 552-571 (TPATFSTSGIGLQTQGKQDG) the composition is skewed to polar residues.

This sequence belongs to the protein kinase superfamily. TKL Ser/Thr protein kinase family. Mg(2+) is required as a cofactor. Mn(2+) serves as cofactor. As to expression, predominantly expressed in testis and prostate. Found predominantly in non-germinal Sertoli cells.

Its subcellular location is the nucleus. The enzyme catalyses L-seryl-[protein] + ATP = O-phospho-L-seryl-[protein] + ADP + H(+). It catalyses the reaction L-threonyl-[protein] + ATP = O-phospho-L-threonyl-[protein] + ADP + H(+). The catalysed reaction is L-tyrosyl-[protein] + ATP = O-phospho-L-tyrosyl-[protein] + ADP + H(+). With respect to regulation, activated by autophosphorylation on Ser-219. In terms of biological role, dual specificity protein kinase activity catalyzing autophosphorylation and phosphorylation of exogenous substrates on both serine/threonine and tyrosine residues. Phosphorylates cofilin at 'Ser-3'. May play an important role in spermatogenesis. The protein is Dual specificity testis-specific protein kinase 2 (TESK2) of Homo sapiens (Human).